The following is a 347-amino-acid chain: Eukaryotic translation initiation factor 3 subunit I (347 aa).

WD repeat units follow at residues 8-49 (GHER…GTLD), 51-89 (HMGS…CVQT), 149-190 (THEG…KLVE), 194-233 (VHKD…VLKT), and 291-330 (GHFG…FDFK).

This sequence belongs to the eIF-3 subunit I family. In terms of assembly, component of the eukaryotic translation initiation factor 3 (eIF-3) complex.

The protein resides in the cytoplasm. Its function is as follows. Component of the eukaryotic translation initiation factor 3 (eIF-3) complex, which is involved in protein synthesis of a specialized repertoire of mRNAs and, together with other initiation factors, stimulates binding of mRNA and methionyl-tRNAi to the 40S ribosome. The eIF-3 complex specifically targets and initiates translation of a subset of mRNAs involved in cell proliferation. This Candida glabrata (strain ATCC 2001 / BCRC 20586 / JCM 3761 / NBRC 0622 / NRRL Y-65 / CBS 138) (Yeast) protein is Eukaryotic translation initiation factor 3 subunit I.